A 580-amino-acid polypeptide reads, in one-letter code: MSTNGGAPSQKRSWLPSRPLLTTTTQTYPPPLLPFKKLHAPPTAARRSLPPAASKPMASSSSSSLPAAWAAAVRAWAVAPALRAAVWACLAMSAMLVAEAAWMGLASLAAAAARRLRGYGYRWEPMAAPPDVEAPAPAPAEFPMVLVQIPMYNEKEVYKLSIGAACALTWPPDRIIIQVLDDSTDPFVKELVELECKEWASKKINIKYEVRNNRKGYKAGALRKGMEHTYAQLCDFVAIFDADFEPESDFLLKTMPYLLHNPKIALVQTRWEFVNYNVCLMTRIQKMSLDYHFKVEQESGSFMHAFFGFNGTAGVWRVSAINQSGGWKDRTTVEDMDLAVRASLKGWEFLYVGDIRVKSELPSTFQAYRHQQHRWTCGAANLFRKMAWEIITNKEVSMWKKYHLLYSFFFVRRAIAPILTFLFYCIVIPLSAMVPEVTIPVWGLVYIPTAITIMNAIRNPGSVHLMPFWILFENVMAMHRMRAALSGLLETARANDWVVTEKVGDQVKDELDVPLLEPLKPTECAERIYIPELLLALYLLICASYDFVLGNHKYYIYIYLQAVAFTVMGFGFVGTRTPCS.

The segment covering 1 to 12 (MSTNGGAPSQKR) has biased composition (polar residues). The interval 1–33 (MSTNGGAPSQKRSWLPSRPLLTTTTQTYPPPLL) is disordered. Positions 15–27 (LPSRPLLTTTTQT) are enriched in low complexity. The helical transmembrane segment at 85 to 105 (AVWACLAMSAMLVAEAAWMGL) threads the bilayer. Asp-182 is an active-site residue. Residues Asp-241 and Asp-243 each contribute to the substrate site. Asp-335 is a catalytic residue. Helical transmembrane passes span 414–434 (AIAPILTFLFYCIVIPLSAMV), 437–457 (VTIPVWGLVYIPTAITIMNAI), 528–548 (IYIPELLLALYLLICASYDFV), and 554–574 (YYIYIYLQAVAFTVMGFGFVG).

It belongs to the glycosyltransferase 2 family. Plant cellulose synthase-like A subfamily.

Its subcellular location is the golgi apparatus membrane. It catalyses the reaction GDP-mannose + (glucomannan)n = GDP + (glucomannan)n+1.. In terms of biological role, probable mannan synthase which consists of a 4-beta-mannosyltransferase activity on mannan using GDP-mannose. The beta-1,4-mannan product is the backbone for galactomannan synthesis by galactomannan galactosyltransferase. Galactomannan is a noncellulosic polysaccharides of plant cell wall. In Oryza sativa subsp. japonica (Rice), this protein is Probable glucomannan 4-beta-mannosyltransferase 2.